We begin with the raw amino-acid sequence, 197 residues long: Probable 26S proteasome non-ATPase regulatory subunit 9 (197 aa).

The PDZ domain occupies 75 to 166; the sequence is KIVVEMENEN…KIIRVTVIRE (92 aa).

It belongs to the proteasome subunit p27 family.

Its function is as follows. Acts as a chaperone during the assembly of the 26S proteasome, specifically of the base subcomplex of the 19S regulatory complex (RC). In Caenorhabditis elegans, this protein is Probable 26S proteasome non-ATPase regulatory subunit 9 (psmd-9).